We begin with the raw amino-acid sequence, 105 residues long: MSGDCIASLKMVESQPLNSKEVEYVEKLLDPFDPVDTVERFTHNPNDPISVPIDPALIWSRKAIMRLIGLVVVLIINFPKVRDKINLNPYLVWVITTLILMGVFY.

2 consecutive transmembrane segments (helical) span residues 56–76 (ALIW…VLII) and 85–105 (INLN…GVFY).

It localises to the membrane. This is an uncharacterized protein from Aedes vexans (Inland floodwater mosquito).